Here is a 1551-residue protein sequence, read N- to C-terminus: ABC-type transporter phomO (1551 aa).

7 consecutive transmembrane segments (helical) span residues 34–54 (LYFEEVVFVLVPSCVFILLAA), 110–130 (CTAGLLVTLHVAGLILLCTTV), 139–159 (SVPASVVAALAFGVVPVLAHF), 172–192 (SSSLLVGLFLCVAVLLRAPLV), 202–222 (GSALVAVEIASLVLQLVLIAV), 314–334 (LGLYALAPVIPRLCLAGFTLA), and 358–378 (GLIGATFLIYTGIAVSTGWYW). The region spanning 326–599 (LCLAGFTLAQ…LLQIIPSFGA (274 aa)) is the ABC transmembrane type-1 1 domain. Asparagine 384 carries N-linked (GlcNAc...) asparagine glycosylation. Helical transmembrane passes span 428-448 (LAYAHELWVAPIETAIGTWML), 452-472 (VGPPGLVVLGIIGVCLGASTY), 535-555 (LIVGTLLSSYSTATLAPVLVF), and 577-597 (LIWISLLASPLIQLLQIIPSF). Residues 645 to 861 (IHNSSFSYTD…VEDENGDVDN (217 aa)) form the ABC transporter 1 domain. The N-linked (GlcNAc...) asparagine glycan is linked to asparagine 647. 678–685 (GPAGCGKS) contributes to the ATP binding site. Asparagine 721 carries an N-linked (GlcNAc...) asparagine glycan. A disordered region spans residues 843–889 (YQFPPSQADVEDENGDVDNGAENTRPRESSHTTEAQSGPPEPKSKPT). The next 4 helical transmembrane spans lie at 903–923 (SIGFLNLVLFIGGGIIFAFCL), 959–979 (VLPLIAVAGWVAQLMMLIVPL), 1027–1044 (LFNTAAALLTGIAQVILI), and 1137–1157 (LVLNLVVAGLALVVMGAAVGL). The ABC transmembrane type-1 2 domain maps to 910 to 1199 (VLFIGGGIIF…LLTAWTSLET (290 aa)). Asparagine 1179 carries an N-linked (GlcNAc...) asparagine glycan. A compositionally biased stretch (basic and acidic residues) spans 1219–1228 (DVLVRPDSLD). The segment at 1219–1296 (DVLVRPDSLD…HEATTITTTS (78 aa)) is disordered. Residues 1259–1270 (YDDDDESDENTD) are compositionally biased toward acidic residues. The ABC transporter 2 domain maps to 1287–1535 (HEATTITTTS…SDIFAFFGRS (249 aa)). An ATP-binding site is contributed by 1323-1330 (GRTGSGKS). The N-linked (GlcNAc...) asparagine glycan is linked to asparagine 1486.

Belongs to the ABC transporter superfamily. ABCC family. Conjugate transporter (TC 3.A.1.208) subfamily.

The protein resides in the membrane. In terms of biological role, ABC-type transporter; part of the gene cluster that mediates the biosynthesis of the phomopsins, a group of hexapeptide mycotoxins which infects lupins and causes lupinosis disease in livestock. This Diaporthe leptostromiformis (Lupinosis disease fungus) protein is ABC-type transporter phomO.